The sequence spans 374 residues: Formylglycine-generating enzyme (374 aa).

Positions Met1 to Gly33 are cleaved as a signal peptide. A disulfide bond links Cys50 and Cys52. A disordered region spans residues Arg57–Gly102. Glu130 lines the Ca(2+) pocket. Asn141 carries N-linked (GlcNAc...) asparagine glycosylation. Intrachain disulfides connect Cys218-Cys365 and Cys235-Cys346. Residues Asn259, Ile260, Asp273, Phe275, Asn293, Gly296, Ala298, and Glu300 each coordinate Ca(2+). Cu(2+)-binding residues include Cys336 and Cys341. The segment at Cys341–Asn360 is interaction with sulfatases.

This sequence belongs to the sulfatase-modifying factor family. Monomer, homodimer and heterodimer with SUMF2. Requires Cu(2+) as cofactor. Post-translationally, N-glycosylated. Contains high-mannose-type oligosaccharides.

Its subcellular location is the endoplasmic reticulum lumen. The catalysed reaction is L-cysteinyl-[sulfatase] + 2 a thiol + O2 = an organic disulfide + 3-oxo-L-alanyl-[sulfatase] + hydrogen sulfide + H2O + H(+). The protein operates within protein modification; sulfatase oxidation. In terms of biological role, oxidase that catalyzes the conversion of cysteine to 3-oxoalanine on target proteins, using molecular oxygen and an unidentified reducing agent. 3-oxoalanine modification, which is also named formylglycine (fGly), occurs in the maturation of arylsulfatases and some alkaline phosphatases that use the hydrated form of 3-oxoalanine as a catalytic nucleophile. Known substrates include GALNS, ARSA, STS and ARSE. The sequence is that of Formylglycine-generating enzyme from Bos taurus (Bovine).